The following is a 111-amino-acid chain: Small ribosomal subunit protein bS16 (111 aa).

The protein belongs to the bacterial ribosomal protein bS16 family.

The protein is Small ribosomal subunit protein bS16 of Rickettsia prowazekii (strain Madrid E).